The sequence spans 303 residues: Cyclin-dependent kinase B1-1 (303 aa).

Positions 4 to 295 (YEKLEKVGEG…AKAAMEHPYF (292 aa)) constitute a Protein kinase domain. ATP contacts are provided by residues 10–18 (VGEGTYGKV) and lysine 33. Threonine 14 bears the Phosphothreonine mark. Tyrosine 15 is modified (phosphotyrosine). Catalysis depends on aspartate 136, which acts as the Proton acceptor. Threonine 170 carries the post-translational modification Phosphothreonine.

The protein belongs to the protein kinase superfamily. CMGC Ser/Thr protein kinase family. CDC2/CDKX subfamily. In terms of tissue distribution, expressed in actively dividing cells: root and shoot apical meristems, and young leaves.

The catalysed reaction is L-seryl-[protein] + ATP = O-phospho-L-seryl-[protein] + ADP + H(+). It carries out the reaction L-threonyl-[protein] + ATP = O-phospho-L-threonyl-[protein] + ADP + H(+). The enzyme catalyses [DNA-directed RNA polymerase] + ATP = phospho-[DNA-directed RNA polymerase] + ADP + H(+). This chain is Cyclin-dependent kinase B1-1 (CDKB1-1), found in Oryza sativa subsp. japonica (Rice).